We begin with the raw amino-acid sequence, 306 residues long: Tryptophan 2,3-dioxygenase (306 aa).

A disordered region spans residues 1–29 (MQPPGDDAAPRCPFAGAHAPDAPHVPEAA). Substrate contacts are provided by residues 75 to 79 (FIIQH), Tyr-137, and Arg-141. Position 264 (His-264) interacts with heme. Thr-278 serves as a coordination point for substrate.

The protein belongs to the tryptophan 2,3-dioxygenase family. In terms of assembly, homotetramer. It depends on heme as a cofactor.

The enzyme catalyses L-tryptophan + O2 = N-formyl-L-kynurenine. It functions in the pathway amino-acid degradation; L-tryptophan degradation via kynurenine pathway; L-kynurenine from L-tryptophan: step 1/2. Its function is as follows. Heme-dependent dioxygenase that catalyzes the oxidative cleavage of the L-tryptophan (L-Trp) pyrrole ring and converts L-tryptophan to N-formyl-L-kynurenine. Catalyzes the oxidative cleavage of the indole moiety. The protein is Tryptophan 2,3-dioxygenase of Burkholderia mallei (strain NCTC 10247).